A 38-amino-acid polypeptide reads, in one-letter code: Large ribosomal subunit protein bL36 (38 aa).

This sequence belongs to the bacterial ribosomal protein bL36 family.

In Flavobacterium johnsoniae (strain ATCC 17061 / DSM 2064 / JCM 8514 / BCRC 14874 / CCUG 350202 / NBRC 14942 / NCIMB 11054 / UW101) (Cytophaga johnsonae), this protein is Large ribosomal subunit protein bL36.